The sequence spans 1435 residues: Cardiac-enriched FHL2-interacting protein (1435 aa).

Disordered stretches follow at residues 109-176, 203-234, 250-270, and 291-311; these read EEKY…PPKF, SNTH…GSSS, FPSP…GTFL, and KDTA…DTTL. Threonine 120 carries the post-translational modification Phosphothreonine. The span at 133–147 shows a compositional bias: polar residues; that stretch reads LRSSNKPVSKVSTLI. A compositionally biased stretch (basic and acidic residues) spans 149–160; sequence SFDRTESQRCES. Phosphoserine is present on serine 323. Disordered regions lie at residues 362–592, 609–772, 795–847, 1007–1108, 1138–1261, and 1363–1435; these read EGKA…LTLS, AERS…EKEN, SQGE…SPSS, PEGD…ARVT, SPRG…PGGP, and QGPR…EGIS. Positions 389–402 are enriched in basic and acidic residues; sequence KGKESLQDTLEEKT. Serine 470 is modified (phosphoserine). Composition is skewed to basic and acidic residues over residues 479 to 493, 522 to 535, 609 to 620, and 650 to 667; these read QEKE…DSYK, VLDE…DGKQ, AERSSYENKEVE, and CNRD…KTHQ. Over residues 668–679 the composition is skewed to polar residues; it reads LENGLSRSVSQE. The span at 727-741 shows a compositional bias: low complexity; sequence KFSTSSSDQSFASFD. A compositionally biased stretch (basic and acidic residues) spans 751 to 772; that stretch reads NQREDRRKDVSAGDSQKDEKEN. The residue at position 816 (serine 816) is a Phosphoserine. Residues 831–847 are compositionally biased toward polar residues; it reads KGTTFSQAKDLTPSPSS. A compositionally biased stretch (low complexity) spans 1055–1066; it reads NSPNPGSPGESS. Polar residues predominate over residues 1067–1082; that stretch reads ACSPAASNIWEESSQA. The segment covering 1083–1093 has biased composition (low complexity); that stretch reads PGGPELLPEEP. The segment covering 1094–1105 has biased composition (polar residues); sequence NQASPWASSSPA. Residues 1182–1193 show a composition bias toward basic residues; it reads RRAKKLASKRRK. Positions 1194–1211 are enriched in basic and acidic residues; that stretch reads TDQAQEKHGESQEGKPCP. The span at 1424-1435 shows a compositional bias: acidic residues; sequence DDLEDFATEGIS.

Interacts with FHL2. In terms of tissue distribution, expressed in the heart and skeletal muscle.

The protein resides in the cytoplasm. Its subcellular location is the myofibril. The protein localises to the sarcomere. It is found in the z line. Functionally, plays an important role in cardiomyocyte hypertrophy via activation of the calcineurin/NFAT signaling pathway. In Homo sapiens (Human), this protein is Cardiac-enriched FHL2-interacting protein.